A 323-amino-acid polypeptide reads, in one-letter code: tRNA U34 carboxymethyltransferase (323 aa).

Carboxy-S-adenosyl-L-methionine-binding positions include lysine 91, tryptophan 105, lysine 110, glycine 130, 152 to 154 (DPT), 181 to 182 (IE), methionine 196, tyrosine 200, and arginine 315.

It belongs to the class I-like SAM-binding methyltransferase superfamily. CmoB family. In terms of assembly, homotetramer.

It carries out the reaction carboxy-S-adenosyl-L-methionine + 5-hydroxyuridine(34) in tRNA = 5-carboxymethoxyuridine(34) in tRNA + S-adenosyl-L-homocysteine + H(+). Its function is as follows. Catalyzes carboxymethyl transfer from carboxy-S-adenosyl-L-methionine (Cx-SAM) to 5-hydroxyuridine (ho5U) to form 5-carboxymethoxyuridine (cmo5U) at position 34 in tRNAs. This is tRNA U34 carboxymethyltransferase from Salmonella gallinarum (strain 287/91 / NCTC 13346).